A 163-amino-acid polypeptide reads, in one-letter code: NADH-quinone oxidoreductase subunit I (163 aa).

4Fe-4S ferredoxin-type domains are found at residues 53 to 83 (LRRYPNGEERCIACKLCEAICPAQAITIEAG) and 94 to 123 (VRYDIDMVKCIYCGFCQEACPVEAIVEGPN). Residues Cys-63, Cys-66, Cys-69, Cys-73, Cys-103, Cys-106, Cys-109, and Cys-113 each contribute to the [4Fe-4S] cluster site.

This sequence belongs to the complex I 23 kDa subunit family. NDH-1 is composed of 14 different subunits. Subunits NuoA, H, J, K, L, M, N constitute the membrane sector of the complex. [4Fe-4S] cluster serves as cofactor.

It localises to the cell inner membrane. It carries out the reaction a quinone + NADH + 5 H(+)(in) = a quinol + NAD(+) + 4 H(+)(out). In terms of biological role, NDH-1 shuttles electrons from NADH, via FMN and iron-sulfur (Fe-S) centers, to quinones in the respiratory chain. The immediate electron acceptor for the enzyme in this species is believed to be ubiquinone. Couples the redox reaction to proton translocation (for every two electrons transferred, four hydrogen ions are translocated across the cytoplasmic membrane), and thus conserves the redox energy in a proton gradient. This chain is NADH-quinone oxidoreductase subunit I, found in Bartonella bacilliformis (strain ATCC 35685 / KC583 / Herrer 020/F12,63).